A 249-amino-acid polypeptide reads, in one-letter code: Phosphomannomutase 1 (249 aa).

Asp-12 functions as the Nucleophile in the catalytic mechanism. Mg(2+) contacts are provided by Asp-12 and Asp-14. Asp-14 (proton donor/acceptor) is an active-site residue. Arg-21, Arg-123, Arg-134, Arg-141, Ser-179, and Asp-181 together coordinate alpha-D-mannose 1-phosphate. Mg(2+) is bound by residues Asp-209, Asp-223, and Thr-227.

This sequence belongs to the eukaryotic PMM family. As to quaternary structure, homodimer.

The protein localises to the cytoplasm. It catalyses the reaction alpha-D-mannose 1-phosphate = D-mannose 6-phosphate. The protein operates within nucleotide-sugar biosynthesis; GDP-alpha-D-mannose biosynthesis; alpha-D-mannose 1-phosphate from D-fructose 6-phosphate: step 2/2. In terms of biological role, involved in the synthesis of the GDP-mannose and dolichol-phosphate-mannose required for a number of critical mannosyl transfer reactions. The chain is Phosphomannomutase 1 (pmmA) from Dictyostelium discoideum (Social amoeba).